We begin with the raw amino-acid sequence, 322 residues long: Short-chain dehydrogenase TIC 32, chloroplastic (322 aa).

NADP(+) contacts are provided by residues 36–42 (GASSGIG), 88–89 (DL), asparagine 115, and threonine 136. Serine 170 contributes to the substrate binding site. Tyrosine 192 serves as the catalytic Proton acceptor. Positions 298 to 314 (DTELAKKVWDFSTKLTD) are interaction with calmodulin.

This sequence belongs to the short-chain dehydrogenases/reductases (SDR) family. As to quaternary structure, part of the Tic complex. Interacts with TIC110. In terms of tissue distribution, expressed in leaves and roots.

The protein localises to the plastid. Its subcellular location is the chloroplast inner membrane. Its function is as follows. Involved in protein precursor import into chloroplasts. Part of the redox regulon consisting of TIC32, TIC 55 and TIC62. The chain is Short-chain dehydrogenase TIC 32, chloroplastic from Arabidopsis thaliana (Mouse-ear cress).